The primary structure comprises 85 residues: Small ribosomal subunit protein bS18 (85 aa).

The span at 1 to 12 (MAFAQAGGGGGQ) shows a compositional bias: gly residues. Residues 1–22 (MAFAQAGGGGGQRRPFFRRRKT) form a disordered region.

The protein belongs to the bacterial ribosomal protein bS18 family. In terms of assembly, part of the 30S ribosomal subunit. Forms a tight heterodimer with protein bS6.

In terms of biological role, binds as a heterodimer with protein bS6 to the central domain of the 16S rRNA, where it helps stabilize the platform of the 30S subunit. This chain is Small ribosomal subunit protein bS18, found in Azorhizobium caulinodans (strain ATCC 43989 / DSM 5975 / JCM 20966 / LMG 6465 / NBRC 14845 / NCIMB 13405 / ORS 571).